The following is a 214-amino-acid chain: Nascent polypeptide-associated complex subunit alpha (214 aa).

Disordered stretches follow at residues 1–57 and 119–179; these read MSNP…NEKK and ASAA…EDKD. Acidic residues predominate over residues 22-38; the sequence is AEDEGSDSSDSEGEGEV. The NAC-A/B domain occupies 52 to 117; it reads SRNEKKARKS…AKIEDLNSQA (66 aa). Residues 119 to 128 are compositionally biased toward low complexity; it reads ASAAAQLAAQ. Basic and acidic residues predominate over residues 129-159; that stretch reads ESHDHAGHDHSGHDHSHDHGKGKAVDTGDEK. Positions 160–171 are enriched in acidic residues; sequence KEEEEDDTEEVD. In terms of domain architecture, UBA spans 175-214; that stretch reads LEDKDIELVMTQASVSRNKAVKALKENDNDIVNSIMALSI.

It belongs to the NAC-alpha family. As to quaternary structure, part of the nascent polypeptide-associated complex (NAC), consisting of EGD2 and EGD1. NAC associates with ribosomes via EGD1.

Its subcellular location is the cytoplasm. It localises to the nucleus. In terms of biological role, component of the nascent polypeptide-associated complex (NAC), a dynamic component of the ribosomal exit tunnel, protecting the emerging polypeptides from interaction with other cytoplasmic proteins to ensure appropriate nascent protein targeting. The NAC complex also promotes mitochondrial protein import by enhancing productive ribosome interactions with the outer mitochondrial membrane and blocks the inappropriate interaction of ribosomes translating non-secretory nascent polypeptides with translocation sites in the membrane of the endoplasmic reticulum. EGD2 may also be involved in transcription regulation. In Sclerotinia sclerotiorum (strain ATCC 18683 / 1980 / Ss-1) (White mold), this protein is Nascent polypeptide-associated complex subunit alpha (egd2).